Here is an 883-residue protein sequence, read N- to C-terminus: 3-hydroxy-3-methylglutaryl-coenzyme A reductase (883 aa).

Topologically, residues 1-9 are cytoplasmic; it reads MLSRLFRMH. The helical transmembrane segment at 10-39 threads the bilayer; that stretch reads GQFVASHPWEVIVGTVTLTICMMSMNMFTG. At 40-56 the chain is on the lumenal side; that stretch reads NDKICGWNYACPKFEED. The helical transmembrane segment at 57–78 threads the bilayer; it reads VLSSDIIILTITRCIAILYIYF. The Cytoplasmic portion of the chain corresponds to 79–89; it reads QFQNLRQLGSK. The helical transmembrane segment at 90-114 threads the bilayer; sequence YILGIAGLFTIFSSFVFSTVVIHFL. The Lumenal segment spans residues 115 to 123; that stretch reads DKELTGLNE. Residues 124-149 form a helical membrane-spanning segment; the sequence is ALPFFLLLIDLSKASALAKFALSSNS. The Cytoplasmic segment spans residues 150-159; the sequence is QDEVRDNIAR. Residues 160 to 187 traverse the membrane as a helical segment; the sequence is GMAILGPTFTLEALVECLVIGVGTMSGV. The Lumenal portion of the chain corresponds to 188 to 191; that stretch reads RQLE. The helical transmembrane segment at 192–220 threads the bilayer; that stretch reads IMCCFGCMSVLANYFAFMTFFPACVSLVL. At 221–249 the chain is on the cytoplasmic side; sequence ELSRESREGRPIWQLSQFASVLEEEEDNK. Residues 250–276 form a helical membrane-spanning segment; that stretch reads PNPVTQRVKMIMSLGLVLVHAHSRWIS. The Lumenal portion of the chain corresponds to 277–316; that stretch reads EPSSQNSTSISDHEVTTMLDDMMPKRVEPSMPLWQFYLSR. A glycan (N-linked (GlcNAc...) asparagine) is linked at Asn-282. The chain crosses the membrane as a helical span at residues 317-341; that stretch reads MVTMDVEQIITLGLALLLAVKYIFF. Residues 342–883 are Cytoplasmic-facing; sequence EQTETESTFS…LPGTCTKKAA (542 aa). Positions 373–396 are disordered; sequence REPEQEKTVHVSTTEEASSKEETE. Active-site charge relay system residues include Glu-554, Lys-686, and Asp-762. His-861 acts as the Proton donor in catalysis.

This sequence belongs to the HMG-CoA reductase family. Homotetramer. Homodimer.

It localises to the endoplasmic reticulum membrane. The protein resides in the peroxisome membrane. The catalysed reaction is (R)-mevalonate + 2 NADP(+) + CoA = (3S)-3-hydroxy-3-methylglutaryl-CoA + 2 NADPH + 2 H(+). It functions in the pathway metabolic intermediate biosynthesis; (R)-mevalonate biosynthesis; (R)-mevalonate from acetyl-CoA: step 3/3. In terms of biological role, catalyzes the conversion of (3S)-hydroxy-3-methylglutaryl-CoA (HMG-CoA) to mevalonic acid, the rate-limiting step in the synthesis of cholesterol and other isoprenoids, thus plays a critical role in cellular cholesterol homeostasis. The chain is 3-hydroxy-3-methylglutaryl-coenzyme A reductase (hmgcr) from Xenopus laevis (African clawed frog).